We begin with the raw amino-acid sequence, 122 residues long: Large ribosomal subunit protein uL18 (122 aa).

The tract at residues 1–24 (MLKKADKNANRLQRHKRVRRKISG) is disordered. Over residues 12–22 (LQRHKRVRRKI) the composition is skewed to basic residues.

It belongs to the universal ribosomal protein uL18 family. In terms of assembly, part of the 50S ribosomal subunit; part of the 5S rRNA/L5/L18/L25 subcomplex. Contacts the 5S and 23S rRNAs.

Its function is as follows. This is one of the proteins that bind and probably mediate the attachment of the 5S RNA into the large ribosomal subunit, where it forms part of the central protuberance. The polypeptide is Large ribosomal subunit protein uL18 (Clostridioides difficile (strain 630) (Peptoclostridium difficile)).